A 106-amino-acid chain; its full sequence is MALRERIRIRLKAYDHRILDQSTTEIVDTAKRTGATVAGPIPLPTSRSITTVLRSPHVDKKSREQFEIRTHKRLLDILEPTQQTVDALMKLDLPAGVDVEIKAFGK.

It belongs to the universal ribosomal protein uS10 family. Part of the 30S ribosomal subunit.

Involved in the binding of tRNA to the ribosomes. The chain is Small ribosomal subunit protein uS10 from Solibacter usitatus (strain Ellin6076).